A 96-amino-acid chain; its full sequence is Small ribosomal subunit protein uS19 (96 aa).

Belongs to the universal ribosomal protein uS19 family.

Its function is as follows. Protein S19 forms a complex with S13 that binds strongly to the 16S ribosomal RNA. The polypeptide is Small ribosomal subunit protein uS19 (Solibacter usitatus (strain Ellin6076)).